Reading from the N-terminus, the 300-residue chain is 11-beta-hydroxysteroid dehydrogenase 1 (300 aa).

Residues 1-7 are Cytoplasmic-facing; the sequence is MAFLKKY. Residues 8–24 traverse the membrane as a helical; Signal-anchor for type II membrane protein segment; it reads LLTILMVFLAYYYYSAN. Over 25-300 the chain is Lumenal; it reads EKFRPEMLQG…SNEKLYGRWA (276 aa). NADP(+)-binding positions include 41-67, 92-93, and 119-123; these read GASKGIGREIAYHLAKMGAHVVVTARS, SM, and NHVLY. Position 170 (Ser170) interacts with substrate. Tyr183 acts as the Proton acceptor in catalysis. 183–187 serves as a coordination point for NADP(+); the sequence is YSASK. Residue Asn207 is glycosylated (N-linked (GlcNAc...) asparagine). Position 218 to 222 (218 to 222) interacts with NADP(+); sequence IDTET.

The protein belongs to the short-chain dehydrogenases/reductases (SDR) family. As to quaternary structure, homodimer. Widely expressed in all peripheral tissues, with highest expression in liver, followed by kidney and lung, and very low expression in heart, lung, spleen, stomach, small intestine, colon, skin, skeletal muscle, and ovary.

It is found in the endoplasmic reticulum membrane. It catalyses the reaction an 11beta-hydroxysteroid + NADP(+) = an 11-oxosteroid + NADPH + H(+). The enzyme catalyses cortisone + NADPH + H(+) = cortisol + NADP(+). It carries out the reaction corticosterone + NADP(+) = 11-dehydrocorticosterone + NADPH + H(+). The catalysed reaction is a 7beta-hydroxysteroid + NADP(+) = a 7-oxosteroid + NADPH + H(+). It catalyses the reaction 7-oxocholesterol + NADPH + H(+) = 7beta-hydroxycholesterol + NADP(+). The enzyme catalyses chenodeoxycholate + NADP(+) = 7-oxolithocholate + NADPH + H(+). It carries out the reaction 7-oxolithocholate + NADPH + H(+) = ursodeoxycholate + NADP(+). The catalysed reaction is glycochenodeoxycholate + NADP(+) = 7-oxoglycolithocholate + NADPH + H(+). It catalyses the reaction taurochenodeoxycholate + NADP(+) = 7-oxotaurolithocholate + NADPH + H(+). The enzyme catalyses tauroursodeoxycholate + NADP(+) = 7-oxotaurolithocholate + NADPH + H(+). It carries out the reaction glycoursodeoxycholate + NADP(+) = 7-oxoglycolithocholate + NADPH + H(+). The catalysed reaction is 7-oxopregnenolone + NADPH + H(+) = 7beta-hydroxypregnenolone + NADP(+). It catalyses the reaction 3beta,7alpha-dihydroxyandrost-5-en-17-one + NADP(+) = 3beta-hydroxy-5-androstene-7,17-dione + NADPH + H(+). The enzyme catalyses 3beta-hydroxy-5-androstene-7,17-dione + NADPH + H(+) = 3beta,7beta-dihydroxyandrost-5-en-17-one + NADP(+). It carries out the reaction 3beta-hydroxy-5alpha-androstane-7,17-dione + NADPH + H(+) = 3beta,7beta-dihydroxy-5alpha-androstan-17-one + NADP(+). Its function is as follows. Controls the reversible conversion of biologically active glucocorticoids such as cortisone to cortisol, and 11-dehydrocorticosterone to corticosterone in the presence of NADP(H). Participates in the corticosteroid receptor-mediated anti-inflammatory response, as well as metabolic and homeostatic processes. Bidirectional in vitro, predominantly functions as a reductase in vivo, thereby increasing the concentration of active glucocorticoids. It has broad substrate specificity, besides glucocorticoids, it accepts other steroid and sterol substrates. Interconverts 7-oxo- and 7-hydroxy-neurosteroids such as 7-oxopregnenolone and 7beta-hydroxypregnenolone, 7-oxodehydroepiandrosterone (3beta-hydroxy-5-androstene-7,17-dione) and 7beta-hydroxydehydroepiandrosterone (3beta,7beta-dihydroxyandrost-5-en-17-one), among others. Catalyzes the stereo-specific conversion of the major dietary oxysterol, 7-ketocholesterol (7-oxocholesterol), into the more polar 7-beta-hydroxycholesterol metabolite. 7-oxocholesterol is one of the most important oxysterols, it participates in several events such as induction of apoptosis, accumulation in atherosclerotic lesions, lipid peroxidation, and induction of foam cell formation. Mediates the 7-oxo reduction of 7-oxolithocholate mainly to chenodeoxycholate, and to a lesser extent to ursodeoxycholate, both in its free form and when conjugated to glycine or taurine, providing a link between glucocorticoid activation and bile acid metabolism. Catalyzes the synthesis of 7-beta-25-dihydroxycholesterol from 7-oxo-25-hydroxycholesterol in vitro, which acts as a ligand for the G-protein-coupled receptor (GPCR) Epstein-Barr virus-induced gene 2 (EBI2) and may thereby regulate immune cell migration. The sequence is that of 11-beta-hydroxysteroid dehydrogenase 1 (HSD11B1) from Cavia porcellus (Guinea pig).